We begin with the raw amino-acid sequence, 366 residues long: tRNA/tmRNA (uracil-C(5))-methyltransferase (366 aa).

S-adenosyl-L-methionine-binding residues include Gln-190, Tyr-218, Asn-223, Glu-239, and Asp-299. Catalysis depends on Cys-324, which acts as the Nucleophile. The Proton acceptor role is filled by Glu-358.

Belongs to the class I-like SAM-binding methyltransferase superfamily. RNA M5U methyltransferase family. TrmA subfamily.

The catalysed reaction is uridine(54) in tRNA + S-adenosyl-L-methionine = 5-methyluridine(54) in tRNA + S-adenosyl-L-homocysteine + H(+). The enzyme catalyses uridine(341) in tmRNA + S-adenosyl-L-methionine = 5-methyluridine(341) in tmRNA + S-adenosyl-L-homocysteine + H(+). Dual-specificity methyltransferase that catalyzes the formation of 5-methyluridine at position 54 (m5U54) in all tRNAs, and that of position 341 (m5U341) in tmRNA (transfer-mRNA). This is tRNA/tmRNA (uracil-C(5))-methyltransferase from Salmonella heidelberg (strain SL476).